The sequence spans 914 residues: Solute carrier family 12 member 9 (914 aa).

Over 1–36 (MASENSPLLAYRLLGEEGAAFPPNGAGGSGVASARK) the chain is Cytoplasmic. The residue at position 6 (Ser6) is a Phosphoserine. The chain crosses the membrane as a helical span at residues 37–57 (LSTFLGVVVPTVLSMFSIVVF). The Extracellular portion of the chain corresponds to 58-72 (LRIGFVVGHAGLLQA). Residues 73–93 (LAMLLVAYVILALTVLSVCAI) traverse the membrane as a helical segment. Topologically, residues 94–119 (ATNGAVRGGGAYFMISRTLGPEVGGS) are cytoplasmic. The chain crosses the membrane as a helical span at residues 120–140 (IGLMFYLANVCGCAVSLLGLV). Over 141-167 (ESILDVFGADVTGSSGIKVLPQGYGWN) the chain is Extracellular. A helical membrane pass occupies residues 168–188 (LLYGSLLLGLVGGVCALGAGL). The Cytoplasmic segment spans residues 189–193 (YARAS). The helical transmembrane segment at 194–214 (FLTFLLVSGSLASVLVSFVAV) threads the bilayer. Residues 215-262 (GPRNITLAPRPGTNGSSVPPRHGHFTGFNGSTLKDNLGAGYAEDYTTG) lie on the Extracellular side of the membrane. N-linked (GlcNAc...) asparagine glycans are attached at residues Asn218, Asn228, and Asn243. The helical transmembrane segment at 263–283 (AMMTFASVFAVLFNGCTGIMA) threads the bilayer. The Cytoplasmic portion of the chain corresponds to 284–297 (GANMSGELKDPSRA). The chain crosses the membrane as a helical span at residues 298–318 (IPLGTIIAVAYTFFIYILLFF). The Extracellular portion of the chain corresponds to 319–338 (LSSFTCDRALLQGDYGFFRD). Residues 339–359 (ISLWPPLVLIGIYATALSASM) traverse the membrane as a helical segment. At 360–376 (SSLIGASRILHALAQDD) the chain is on the cytoplasmic side. The helical transmembrane segment at 377–399 (LFGVILAPAKVVSGGGNPWGAVL) threads the bilayer. Topologically, residues 400–416 (YSWGLVQLVLLAGKLNT) are extracellular. The helical transmembrane segment at 417–437 (LAAVVTVFYLVAYAAVDLSCL) threads the bilayer. The Cytoplasmic segment spans residues 438–466 (SLEWASAPNFRPTFSLFSWHTCLLGVASC). A helical membrane pass occupies residues 467–487 (LLMMFLISPGAAGGSLLLMGL). The Extracellular portion of the chain corresponds to 488–740 (LSALLTARGG…LLRPRGGPGY (253 aa)). A disordered region spans residues 645–678 (PAFSEPAEGTREGGSPALSTLFPPPRAPGSPRAL). The chain crosses the membrane as a helical span at residues 741–761 (VDVCGLFLLQMATILSMVPAW). The Cytoplasmic segment spans residues 762-914 (HSARLRIFLC…GVTPVTCTDL (153 aa)). The segment at 843-864 (QQGRGTGGGPGGPEGRDGEEGP) is disordered. The segment covering 846-855 (RGTGGGPGGP) has biased composition (gly residues).

Belongs to the SLC12A transporter family. As to quaternary structure, interacts with SLC12A1.

The protein localises to the cell membrane. The protein resides in the lysosome membrane. Its function is as follows. May be an inhibitor of SLC12A1. Seems to correspond to a subunit of a multimeric transport system and thus, additional subunits may be required for its function. May play a role in lysosomal ion flux and osmoregulation. This Rattus norvegicus (Rat) protein is Solute carrier family 12 member 9 (Slc12a9).